The sequence spans 207 residues: Protein DMP1 (207 aa).

Residues 1-20 (MSETSLLIPKTNSPASSENM) form a disordered region. 4 helical membrane passes run 33-53 (LIKL…PVLT), 64-84 (VMSS…CFTD), 121-141 (IADF…VLLD), and 159-179 (LVMA…ALFP).

Belongs to the plant DMP1 protein family. In terms of tissue distribution, expressed in leaves, siliques and roots.

Its subcellular location is the endoplasmic reticulum membrane. It localises to the vacuole membrane. Functionally, involved in membrane remodeling including fission during breakdown of the endoplasmic reticulum (ER) and the tonoplast during leaf senescence and in membrane fusion during vacuole biogenesis in roots. This Arabidopsis thaliana (Mouse-ear cress) protein is Protein DMP1.